The following is a 512-amino-acid chain: Maturase K (512 aa).

Belongs to the intron maturase 2 family. MatK subfamily.

Its subcellular location is the plastid. The protein resides in the chloroplast. Its function is as follows. Usually encoded in the trnK tRNA gene intron. Probably assists in splicing its own and other chloroplast group II introns. The chain is Maturase K from Oenothera parviflora (Small-flowered evening primrose).